The sequence spans 477 residues: Leukotoxin export protein LtxD (477 aa).

The chain crosses the membrane as a helical span at residues 64–84 (IMLFLTLAIIVSIFSNVEIIA). Residues 206–287 (LNLNKKEAEK…ENEVLLAKEE (82 aa)) are a coiled coil.

This sequence belongs to the membrane fusion protein (MFP) (TC 8.A.1) family. In terms of assembly, probably part of a complex composed of LtxB, LtxD and TdeA, which forms a single transport channel across the two membranes.

The protein localises to the cell inner membrane. In terms of biological role, involved in the export of the LtxA leukotoxin. This chain is Leukotoxin export protein LtxD, found in Aggregatibacter actinomycetemcomitans (Actinobacillus actinomycetemcomitans).